The following is a 747-amino-acid chain: DNA-directed RNA polymerase subunit beta' (747 aa).

Residues Cys-70, Cys-72, Cys-97, and Cys-100 each coordinate Zn(2+). The Mg(2+) site is built by Asp-502, Asp-504, and Asp-506.

Belongs to the RNA polymerase beta' chain family. RpoC1 subfamily. As to quaternary structure, in plastids the minimal PEP RNA polymerase catalytic core is composed of four subunits: alpha, beta, beta', and beta''. When a (nuclear-encoded) sigma factor is associated with the core the holoenzyme is formed, which can initiate transcription. It depends on Mg(2+) as a cofactor. Zn(2+) is required as a cofactor.

The protein localises to the plastid. The protein resides in the chloroplast. It carries out the reaction RNA(n) + a ribonucleoside 5'-triphosphate = RNA(n+1) + diphosphate. In terms of biological role, DNA-dependent RNA polymerase catalyzes the transcription of DNA into RNA using the four ribonucleoside triphosphates as substrates. The protein is DNA-directed RNA polymerase subunit beta' of Gnetum parvifolium (Small-leaved jointfir).